The primary structure comprises 115 residues: Large ribosomal subunit protein P2 (115 aa).

The residue at position 1 (methionine 1) is an N-acetylmethionine. Residues serine 17 and serine 19 each carry the phosphoserine modification. Lysine 21 carries the N6-acetyllysine; alternate modification. Lysine 21 is subject to N6-succinyllysine; alternate. Low complexity predominate over residues 78–90 (GSAAPAAGSAPAA). The segment at 78–115 (GSAAPAAGSAPAAAEEKKDEKKEESEESDDDMGFGLFD) is disordered. Phosphoserine occurs at positions 79 and 86. Over residues 91-101 (AEEKKDEKKEE) the composition is skewed to basic and acidic residues. Phosphoserine occurs at positions 102 and 105.

It belongs to the eukaryotic ribosomal protein P1/P2 family. In terms of assembly, heterodimer with P1 at the lateral ribosomal stalk of the large ribosomal subunit.

Plays an important role in the elongation step of protein synthesis. This chain is Large ribosomal subunit protein P2 (RPLP2), found in Homo sapiens (Human).